Reading from the N-terminus, the 284-residue chain is Protein phosphatase 1 regulatory subunit 3B (284 aa).

The short motif at 61–64 (RVSF) is the PP1-binding motif element. One can recognise a CBM21 domain in the interval 124-232 (RNRLQTNHVC…SNKGKNYRIT (109 aa)). Serine 260 bears the Phosphoserine mark.

As to quaternary structure, interacts with glycogen, PPP1CC catalytic subunit of PP1 and PYGL. Associates with glycogen particles. Forms complexes with debranching enzyme, glycogen phosphorylase, glycogen synthase and phosphorylase kinase which is necessary for its regulation of PP1 activity. As to expression, highly expressed in liver (at protein level). Expressed predominantly in liver. Expressed moderately in heart. Expressed weakly in prostate, stomach, thyroid, lung, kidney, spleen and skeletal muscle.

In terms of biological role, acts as a glycogen-targeting subunit for phosphatase PP1. Facilitates interaction of the PP1 with enzymes of the glycogen metabolism and regulates its activity. Suppresses the rate at which PP1 dephosphorylates (inactivates) glycogen phosphorylase and enhances the rate at which it activates glycogen synthase and therefore limits glycogen breakdown. Its activity is inhibited by PYGL, resulting in inhibition of the glycogen synthase and glycogen phosphorylase phosphatase activities of PP1. Dramatically increases basal and insulin-stimulated glycogen synthesis upon overexpression in hepatocytes. This is Protein phosphatase 1 regulatory subunit 3B (Ppp1r3b) from Mus musculus (Mouse).